The sequence spans 291 residues: MSAEIINGKEIAAEIRREIKQETAQFIAATGVRPGLAVILVGNDPASEVYVRNKGIQAEEVGFLSQIYRLPAQTTQAELLAKIVALNNDPQICGILVQLPLPAHLNAEIVLNTIDPNKDVDGFHPLNIGRLWAGEPCSVPCTPLGCSLILKRYFGDSLAGKKALIIGRSNIVGKPMAALLLQQHATVTIAHSKTPDVPALCRQADIVIAAVGQPELVKGDWIKSGAVVLDVGINRIAVGDKTKLVGDVAFESAKEVAAAITPVPGGIGPMTIACLLKNTLTLAKAIQQSGK.

NADP(+)-binding positions include 167–169, serine 192, and isoleucine 233; that span reads GRS.

Belongs to the tetrahydrofolate dehydrogenase/cyclohydrolase family. In terms of assembly, homodimer.

It carries out the reaction (6R)-5,10-methylene-5,6,7,8-tetrahydrofolate + NADP(+) = (6R)-5,10-methenyltetrahydrofolate + NADPH. It catalyses the reaction (6R)-5,10-methenyltetrahydrofolate + H2O = (6R)-10-formyltetrahydrofolate + H(+). It participates in one-carbon metabolism; tetrahydrofolate interconversion. Catalyzes the oxidation of 5,10-methylenetetrahydrofolate to 5,10-methenyltetrahydrofolate and then the hydrolysis of 5,10-methenyltetrahydrofolate to 10-formyltetrahydrofolate. The chain is Bifunctional protein FolD from Dichelobacter nodosus (strain VCS1703A).